Reading from the N-terminus, the 349-residue chain is Vacuolar protein sorting-associated protein 26 (349 aa).

A disordered region spans residues 299–349 (GVTKPGLPGSTNNNNNNNTSNTNNTNTPQQKVTESQNEVPEPENNSSDESD). Residues 308–325 (STNNNNNNNTSNTNNTNT) show a composition bias toward low complexity. The segment covering 326-343 (PQQKVTESQNEVPEPENN) has biased composition (polar residues).

It belongs to the VPS26 family. Component of a retromer subcomplex consisting of vps29, vps26 and vps35.

The protein localises to the membrane. Plays a role in vesicular protein sorting. Component of the membrane-associated retromer complex which is essential in endosome-to-Golgi retrograde transport. The vps29-vps26-vps35 subcomplex may be involved in cargo selection. This is Vacuolar protein sorting-associated protein 26 (vps26) from Dictyostelium discoideum (Social amoeba).